Here is a 701-residue protein sequence, read N- to C-terminus: CRS2-associated factor 1, chloroplastic (701 aa).

The N-terminal 77 residues, 1 to 77 (MATSHLTSRS…ENGEPAAGVR (77 aa)), are a transit peptide targeting the chloroplast. 2 consecutive CRM domains span residues 183 to 279 (EPLT…TRPI) and 301 to 397 (DGLT…LPPL). Residues 581-603 (GILLLFKQAIDSGMALVLNENEF) form a CRS2 binding region.

In terms of assembly, interacts with CRS2 and RNA. Part of large ribonucleo-protein complexes that include group IIB introns, CRS2 and CAF1.

The protein resides in the plastid. It is found in the chloroplast stroma. Functionally, required for the splicing of group IIB introns in chloroplasts. Forms splicing particles with CRS2. Interacts with RNA and confers intron specificity of the splicing particles. This chain is CRS2-associated factor 1, chloroplastic, found in Oryza sativa subsp. japonica (Rice).